Here is a 536-residue protein sequence, read N- to C-terminus: MFS-type efflux pump MFS1 (536 aa).

The next 3 helical transmembrane spans lie at 30 to 50, 80 to 100, and 102 to 122; these read VTGL…LLVA, YLLT…FFPV, and WVFL…GAAP. Residue Asn123 is glycosylated (N-linked (GlcNAc...) asparagine). Helical transmembrane passes span 133 to 153, 163 to 183, and 191 to 211; these read VAGI…AYSI, GAIG…GGAF, and WCFY…LIFL. Residue Asn221 is glycosylated (N-linked (GlcNAc...) asparagine). The next 8 helical transmembrane spans lie at 234–254, 264–284, 306–326, 342–362, 366–386, 400–420, 426–446, and 503–523; these read IGTA…QWGG, IIAL…FQIR, FFLF…PIWF, IPMV…VTAI, APLY…LTTF, IIFG…AQAV, VAVG…LFVS, and TWYV…GMEW.

This sequence belongs to the major facilitator superfamily. TCR/Tet family.

It is found in the cell membrane. MFS-type efflux pump involved in the modulation susceptibility to azoles, including fluconazole, itraconazole, ketoconazole, miconazole and voriconazole. Confers also increased resistance chloramphenicol and thiamphenicol, suggesting that it acts as a pleiotropic drug transporter with a broad substrate spectrum. Finally, increases the tolerance to cycloheximide when expressed in S.cerevisiae, but not in dermatophyte species. This chain is MFS-type efflux pump MFS1, found in Trichophyton rubrum (strain ATCC MYA-4607 / CBS 118892) (Athlete's foot fungus).